Consider the following 349-residue polypeptide: S-adenosylmethionine:tRNA ribosyltransferase-isomerase (349 aa).

Belongs to the QueA family. As to quaternary structure, monomer.

The protein localises to the cytoplasm. It catalyses the reaction 7-aminomethyl-7-carbaguanosine(34) in tRNA + S-adenosyl-L-methionine = epoxyqueuosine(34) in tRNA + adenine + L-methionine + 2 H(+). The protein operates within tRNA modification; tRNA-queuosine biosynthesis. Its function is as follows. Transfers and isomerizes the ribose moiety from AdoMet to the 7-aminomethyl group of 7-deazaguanine (preQ1-tRNA) to give epoxyqueuosine (oQ-tRNA). In Pseudomonas fluorescens (strain SBW25), this protein is S-adenosylmethionine:tRNA ribosyltransferase-isomerase.